We begin with the raw amino-acid sequence, 685 residues long: Glycine--tRNA ligase beta subunit (685 aa).

A disordered region spans residues 58–77 (GLTAQSPTTREERKGPRTDA). A compositionally biased stretch (basic and acidic residues) spans 66-77 (TREERKGPRTDA).

Belongs to the class-II aminoacyl-tRNA synthetase family. As to quaternary structure, tetramer of two alpha and two beta subunits.

The protein resides in the cytoplasm. It catalyses the reaction tRNA(Gly) + glycine + ATP = glycyl-tRNA(Gly) + AMP + diphosphate. This is Glycine--tRNA ligase beta subunit from Paracoccus denitrificans (strain Pd 1222).